Here is a 269-residue protein sequence, read N- to C-terminus: 4-hydroxy-tetrahydrodipicolinate reductase (269 aa).

Residues 13–18 (GASGRM) and aspartate 39 each bind NAD(+). Arginine 40 is an NADP(+) binding site. NAD(+) contacts are provided by residues 101 to 103 (GTT) and 125 to 128 (APNM). Histidine 158 serves as the catalytic Proton donor/acceptor. Histidine 159 contacts (S)-2,3,4,5-tetrahydrodipicolinate. Catalysis depends on lysine 162, which acts as the Proton donor. Residue 168 to 169 (GT) coordinates (S)-2,3,4,5-tetrahydrodipicolinate.

The protein belongs to the DapB family.

The protein resides in the cytoplasm. It carries out the reaction (S)-2,3,4,5-tetrahydrodipicolinate + NAD(+) + H2O = (2S,4S)-4-hydroxy-2,3,4,5-tetrahydrodipicolinate + NADH + H(+). It catalyses the reaction (S)-2,3,4,5-tetrahydrodipicolinate + NADP(+) + H2O = (2S,4S)-4-hydroxy-2,3,4,5-tetrahydrodipicolinate + NADPH + H(+). It functions in the pathway amino-acid biosynthesis; L-lysine biosynthesis via DAP pathway; (S)-tetrahydrodipicolinate from L-aspartate: step 4/4. Catalyzes the conversion of 4-hydroxy-tetrahydrodipicolinate (HTPA) to tetrahydrodipicolinate. The protein is 4-hydroxy-tetrahydrodipicolinate reductase of Bordetella bronchiseptica (strain ATCC BAA-588 / NCTC 13252 / RB50) (Alcaligenes bronchisepticus).